The chain runs to 214 residues: dITP/XTP pyrophosphatase (214 aa).

13–18 (SHNKGK) provides a ligand contact to substrate. 2 residues coordinate Mg(2+): glutamate 45 and aspartate 74. The active-site Proton acceptor is aspartate 74. Residues serine 75, 163–166 (FGYD), lysine 186, and 199–200 (HR) each bind substrate.

The protein belongs to the HAM1 NTPase family. In terms of assembly, homodimer. Mg(2+) is required as a cofactor.

The catalysed reaction is XTP + H2O = XMP + diphosphate + H(+). The enzyme catalyses dITP + H2O = dIMP + diphosphate + H(+). It carries out the reaction ITP + H2O = IMP + diphosphate + H(+). Pyrophosphatase that catalyzes the hydrolysis of nucleoside triphosphates to their monophosphate derivatives, with a high preference for the non-canonical purine nucleotides XTP (xanthosine triphosphate), dITP (deoxyinosine triphosphate) and ITP. Seems to function as a house-cleaning enzyme that removes non-canonical purine nucleotides from the nucleotide pool, thus preventing their incorporation into DNA/RNA and avoiding chromosomal lesions. This Agrobacterium fabrum (strain C58 / ATCC 33970) (Agrobacterium tumefaciens (strain C58)) protein is dITP/XTP pyrophosphatase.